A 428-amino-acid chain; its full sequence is CinA-like protein (428 aa).

It belongs to the CinA family.

The chain is CinA-like protein from Endomicrobium trichonymphae.